We begin with the raw amino-acid sequence, 128 residues long: Iron-sulfur cluster insertion protein ErpA (128 aa).

Iron-sulfur cluster-binding residues include cysteine 56, cysteine 120, and cysteine 122.

It belongs to the HesB/IscA family. As to quaternary structure, homodimer. Iron-sulfur cluster is required as a cofactor.

Its function is as follows. Required for insertion of 4Fe-4S clusters for at least IspG. This is Iron-sulfur cluster insertion protein ErpA from Xanthomonas euvesicatoria pv. vesicatoria (strain 85-10) (Xanthomonas campestris pv. vesicatoria).